A 935-amino-acid polypeptide reads, in one-letter code: Isoleucine--tRNA ligase (935 aa).

The short motif at 58-68 (PYANGSIHVGH) is the 'HIGH' region element. An L-isoleucyl-5'-AMP-binding site is contributed by Glu-558. The 'KMSKS' region motif lies at 599–603 (KMSKS). Lys-602 is an ATP binding site. Positions 897, 900, 917, and 920 each coordinate Zn(2+).

It belongs to the class-I aminoacyl-tRNA synthetase family. IleS type 1 subfamily. Monomer. Requires Zn(2+) as cofactor.

It is found in the cytoplasm. It carries out the reaction tRNA(Ile) + L-isoleucine + ATP = L-isoleucyl-tRNA(Ile) + AMP + diphosphate. Its function is as follows. Catalyzes the attachment of isoleucine to tRNA(Ile). As IleRS can inadvertently accommodate and process structurally similar amino acids such as valine, to avoid such errors it has two additional distinct tRNA(Ile)-dependent editing activities. One activity is designated as 'pretransfer' editing and involves the hydrolysis of activated Val-AMP. The other activity is designated 'posttransfer' editing and involves deacylation of mischarged Val-tRNA(Ile). This Francisella tularensis subsp. tularensis (strain WY96-3418) protein is Isoleucine--tRNA ligase.